The chain runs to 351 residues: Transcriptional activator POG1 (351 aa).

Basic and acidic residues predominate over residues 1 to 27 (MKQEPHRQSEEKEKPKGPMAVEREHHT). Residues 1-56 (MKQEPHRQSEEKEKPKGPMAVEREHHTSLSSGTTMTASTGDESTNSRPVESSQTEK) are disordered. Positions 28–56 (SLSSGTTMTASTGDESTNSRPVESSQTEK) are enriched in polar residues. Serine 152 and serine 168 each carry phosphoserine. 2 disordered regions span residues 237–256 (GPQA…TPVM) and 280–351 (SMGP…PPPT). 2 stretches are compositionally biased toward polar residues: residues 241 to 256 (QLPT…TPVM) and 287 to 296 (IYGQQHQPQP). Serine 314 carries the phosphoserine modification.

This sequence belongs to the POG1 family. Phosphorylated by CDC28.

It localises to the nucleus. In terms of biological role, transcriptional activator which promotes cell cycle recovery with CLN2, after pheromone induced G1 arrest, probably inhibiting the ability of STE20 to activate the pheromone response pathway. Binds the promoters of genes that function in cell cycle regulation, cytoskeletal organization, and spindle assembly. May also be involved in stress-resistance. This chain is Transcriptional activator POG1 (POG1), found in Saccharomyces cerevisiae (strain YJM789) (Baker's yeast).